Consider the following 314-residue polypeptide: Inositol oxygenase 5 (314 aa).

Substrate-binding positions include arginine 54 and 112–114 (DES). 3 residues coordinate Fe cation: histidine 125, histidine 150, and aspartate 151. Substrate-binding positions include lysine 154 and 171 to 172 (GD). Fe cation-binding residues include histidine 223, histidine 249, and aspartate 282. 249–250 (HS) serves as a coordination point for substrate.

The protein belongs to the myo-inositol oxygenase family. It depends on Fe cation as a cofactor. Expressed in flowers and siliques.

Its subcellular location is the cytoplasm. The enzyme catalyses myo-inositol + O2 = D-glucuronate + H2O + H(+). It functions in the pathway polyol metabolism; myo-inositol degradation into D-glucuronate; D-glucuronate from myo-inositol: step 1/1. In terms of biological role, involved in the biosynthesis of UDP-glucuronic acid (UDP-GlcA), providing nucleotide sugars for cell-wall polymers. May be also involved in plant ascorbate biosynthesis. The polypeptide is Inositol oxygenase 5 (MIOX5) (Arabidopsis thaliana (Mouse-ear cress)).